The primary structure comprises 233 residues: Superoxide dismutase [Mn], mitochondrial (233 aa).

The N-terminal 27 residues, 1-27 (MALRSLVTRKNLPSAFKAATGLGQLRG), are a transit peptide targeting the mitochondrion. Histidine 55, histidine 103, aspartate 192, and histidine 196 together coordinate Mn(2+).

Belongs to the iron/manganese superoxide dismutase family. In terms of assembly, homotetramer. Requires Mn(2+) as cofactor. In terms of tissue distribution, present in all tissues examined (leaf, petiole, root, latex, callus) with young leaves showing the highest levels in intact plants.

Its subcellular location is the mitochondrion matrix. The catalysed reaction is 2 superoxide + 2 H(+) = H2O2 + O2. In terms of biological role, destroys superoxide anion radicals which are normally produced within the cells and which are toxic to biological systems. The polypeptide is Superoxide dismutase [Mn], mitochondrial (SODA) (Hevea brasiliensis (Para rubber tree)).